Consider the following 329-residue polypeptide: Type 2 lactosamine alpha-2,3-sialyltransferase (329 aa).

The Cytoplasmic segment spans residues 1–4 (MKGY). Residues 5 to 25 (LVAIFLSSIFLYYVLYCILWG) traverse the membrane as a helical; Signal-anchor for type II membrane protein segment. At 26–329 (TNGYWFPAEE…IKKKMVINLT (304 aa)) the chain is on the lumenal side. N-linked (GlcNAc...) asparagine glycans are attached at residues N129, N181, N295, and N308.

It belongs to the glycosyltransferase 29 family.

The protein resides in the golgi apparatus membrane. It catalyses the reaction a neolactoside nLc4Cer(d18:1(4E)) + CMP-N-acetyl-beta-neuraminate = a neolactoside IV(3)-alpha-NeuAc-nLc4Cer(d18:1(4E)) + CMP + H(+). It carries out the reaction a beta-D-galactosyl-(1-&gt;4)-N-acetyl-beta-D-glucosaminyl derivative + CMP-N-acetyl-beta-neuraminate = an N-acetyl-alpha-neuraminyl-(2-&gt;3)-beta-D-galactosyl-(1-&gt;4)-N-acetyl-beta-D-glucosaminyl derivative + CMP + H(+). The catalysed reaction is a neolactoside nLc6Cer(d18:1(4E)) + CMP-N-acetyl-beta-neuraminate = a neolactoside VI(3)-alpha-NeuNAc-nLc6Cer(d18:1(4E)) + CMP + H(+). In terms of biological role, transfers the sialyl residue from CMP-N-acetyl-beta-neuraminate to the terminal galactose residue on sugar chains of glycoproteins and glycolipids. It's alpha-2,3-sialyltransferase activity is specific toward type II glycan chains (Galbeta1-4GlcNAc) on glycoproteins and glycolipids such as neolactosides nLc4Cer and nLc6Cer, whose sialyl-products serve as precursors for the Lewis X antigen. Critically involved in the synthesis of functional selectin ligands needed for neutrophil recruitment during inflammation and lymphocyte homing to the lymph nodes. This Mus musculus (Mouse) protein is Type 2 lactosamine alpha-2,3-sialyltransferase (St3gal6).